The chain runs to 458 residues: Probable Xaa-Pro aminopeptidase pepP (458 aa).

Mn(2+)-binding residues include aspartate 254, aspartate 265, glutamate 388, and glutamate 428.

Belongs to the peptidase M24B family. Mn(2+) is required as a cofactor.

It catalyses the reaction Release of any N-terminal amino acid, including proline, that is linked to proline, even from a dipeptide or tripeptide.. In terms of biological role, catalyzes the removal of a penultimate prolyl residue from the N-termini of peptides. This chain is Probable Xaa-Pro aminopeptidase pepP (pepP), found in Botryotinia fuckeliana (strain B05.10) (Noble rot fungus).